We begin with the raw amino-acid sequence, 63 residues long: Iota-crystallin (63 aa).

The protein belongs to the calycin superfamily. Fatty-acid binding protein (FABP) family.

Binds vitamin A2 in the eye lens and thus functions as a UV filter. Intracellular transport of retinol. In Gonatodes vittatus (Wiegmann's striped gecko), this protein is Iota-crystallin (CRBPI).